The following is a 163-amino-acid chain: 16S rRNA aminocarboxypropyltransferase (163 aa).

Residues Thr-18, Ile-66, Leu-87, and Ser-106 each coordinate S-adenosyl-L-methionine.

The protein belongs to the TDD superfamily. TSR3 family.

Its subcellular location is the cytoplasm. The enzyme catalyses an N(1)-methylpseudouridine in rRNA + S-adenosyl-L-methionine = N(1)-methyl-N(3)-[(3S)-3-amino-3-carboxypropyl]pseudouridine in rRNA + S-methyl-5'-thioadenosine + H(+). Functionally, aminocarboxypropyltransferase that catalyzes the aminocarboxypropyl transfer on pseudouridine corresponding to position 914 in M.jannaschii 16S rRNA. It constitutes the last step in biosynthesis of the hypermodified N1-methyl-N3-(3-amino-3-carboxypropyl) pseudouridine (m1acp3-Psi). The sequence is that of 16S rRNA aminocarboxypropyltransferase from Thermoplasma acidophilum (strain ATCC 25905 / DSM 1728 / JCM 9062 / NBRC 15155 / AMRC-C165).